Reading from the N-terminus, the 423-residue chain is Histidine--tRNA ligase (423 aa).

Belongs to the class-II aminoacyl-tRNA synthetase family. In terms of assembly, homodimer.

The protein localises to the cytoplasm. It catalyses the reaction tRNA(His) + L-histidine + ATP = L-histidyl-tRNA(His) + AMP + diphosphate + H(+). The chain is Histidine--tRNA ligase from Phytoplasma mali (strain AT).